The chain runs to 1088 residues: ATP-dependent helicase/deoxyribonuclease subunit B (1088 aa).

This sequence belongs to the helicase family. AddB/RexB type 2 subfamily. In terms of assembly, heterodimer of AddA and RexB. Mg(2+) serves as cofactor.

Its function is as follows. The heterodimer acts as both an ATP-dependent DNA helicase and an ATP-dependent, dual-direction single-stranded exonuclease. Recognizes the chi site generating a DNA molecule suitable for the initiation of homologous recombination. This subunit has 5' -&gt; 3' nuclease activity but not helicase activity. The protein is ATP-dependent helicase/deoxyribonuclease subunit B of Streptococcus suis (strain 98HAH33).